We begin with the raw amino-acid sequence, 453 residues long: Ribose 1,5-bisphosphate phosphokinase PhnN (453 aa).

The disordered stretch occupies residues methionine 1–leucine 21. The interval methionine 1 to proline 271 is unknown. Residues histidine 272–lysine 453 are ribose 1,5-bisphosphokinase.

In the C-terminal section; belongs to the ribose 1,5-bisphosphokinase family.

The enzyme catalyses alpha-D-ribose 1,5-bisphosphate + ATP = 5-phospho-alpha-D-ribose 1-diphosphate + ADP. It participates in metabolic intermediate biosynthesis; 5-phospho-alpha-D-ribose 1-diphosphate biosynthesis; 5-phospho-alpha-D-ribose 1-diphosphate from D-ribose 5-phosphate (route II): step 3/3. Functionally, catalyzes the phosphorylation of ribose 1,5-bisphosphate to 5-phospho-D-ribosyl alpha-1-diphosphate (PRPP). This Janthinobacterium sp. (strain Marseille) (Minibacterium massiliensis) protein is Ribose 1,5-bisphosphate phosphokinase PhnN (phnN).